The sequence spans 734 residues: 1,4-alpha-glucan branching enzyme GlgB (734 aa).

The Nucleophile role is filled by aspartate 413. The active-site Proton donor is glutamate 466.

It belongs to the glycosyl hydrolase 13 family. GlgB subfamily. In terms of assembly, monomer.

It catalyses the reaction Transfers a segment of a (1-&gt;4)-alpha-D-glucan chain to a primary hydroxy group in a similar glucan chain.. It functions in the pathway glycan biosynthesis; glycogen biosynthesis. Catalyzes the formation of the alpha-1,6-glucosidic linkages in glycogen by scission of a 1,4-alpha-linked oligosaccharide from growing alpha-1,4-glucan chains and the subsequent attachment of the oligosaccharide to the alpha-1,6 position. The sequence is that of 1,4-alpha-glucan branching enzyme GlgB from Nitrosomonas europaea (strain ATCC 19718 / CIP 103999 / KCTC 2705 / NBRC 14298).